The sequence spans 212 residues: Large ribosomal subunit protein uL3 (212 aa).

A disordered region spans residues 129–156 (RRGPMGHGSKNHRAPGSTGAGTTPGRIY). Low complexity predominate over residues 142-153 (APGSTGAGTTPG).

It belongs to the universal ribosomal protein uL3 family. In terms of assembly, part of the 50S ribosomal subunit. Forms a cluster with proteins L14 and L19.

Its function is as follows. One of the primary rRNA binding proteins, it binds directly near the 3'-end of the 23S rRNA, where it nucleates assembly of the 50S subunit. The sequence is that of Large ribosomal subunit protein uL3 from Acaryochloris marina (strain MBIC 11017).